The chain runs to 449 residues: Histidinol dehydrogenase (449 aa).

NAD(+)-binding residues include Y135, Q199, and N229. T252, Q274, and H277 together coordinate substrate. Q274 and H277 together coordinate Zn(2+). Residues E343 and H344 each act as proton acceptor in the active site. The substrate site is built by H344, D377, E431, and H436. D377 serves as a coordination point for Zn(2+). H436 is a binding site for Zn(2+).

Belongs to the histidinol dehydrogenase family. It depends on Zn(2+) as a cofactor.

The enzyme catalyses L-histidinol + 2 NAD(+) + H2O = L-histidine + 2 NADH + 3 H(+). Its pathway is amino-acid biosynthesis; L-histidine biosynthesis; L-histidine from 5-phospho-alpha-D-ribose 1-diphosphate: step 9/9. Functionally, catalyzes the sequential NAD-dependent oxidations of L-histidinol to L-histidinaldehyde and then to L-histidine. This Corynebacterium diphtheriae (strain ATCC 700971 / NCTC 13129 / Biotype gravis) protein is Histidinol dehydrogenase.